Consider the following 576-residue polypeptide: Capsid protein (576 aa).

The segment at 489–576 is disordered; sequence GYREPKPKPG…GLLALLKEKK (88 aa). The span at 496–509 shows a compositional bias: pro residues; it reads KPGPPETLIPPGAP. The span at 520-537 shows a compositional bias: acidic residues; that stretch reads TESDDFDTGDSEEEEEDH. The segment covering 538–551 has biased composition (basic and acidic residues); it reads QDPRWVRESLDKLT. Positions 562–576 are enriched in low complexity; that stretch reads QQLGKGLLALLKEKK.

It belongs to the anelloviridae capsid protein family.

Its subcellular location is the virion. Self-assembles to form an icosahedral capsid with a T=1 symmetry, about 30 nm in diameter, and consisting of 60 capsid proteins. The capsid encapsulates the genomic DNA. Capsid protein is involved in attachment and entry into the host cell. The sequence is that of Capsid protein from Torque teno canis virus (isolate Cf-TTV10).